A 387-amino-acid chain; its full sequence is Probable aminomethyltransferase, mitochondrial (387 aa).

Substrate contacts are provided by Glu219, Arg248, and Tyr385.

Belongs to the GcvT family. The glycine cleavage system is composed of four proteins: P, T, L and H.

Its subcellular location is the mitochondrion. The catalysed reaction is N(6)-[(R)-S(8)-aminomethyldihydrolipoyl]-L-lysyl-[protein] + (6S)-5,6,7,8-tetrahydrofolate = N(6)-[(R)-dihydrolipoyl]-L-lysyl-[protein] + (6R)-5,10-methylene-5,6,7,8-tetrahydrofolate + NH4(+). Its function is as follows. The glycine cleavage system catalyzes the degradation of glycine. The sequence is that of Probable aminomethyltransferase, mitochondrial (gcv1) from Schizosaccharomyces pombe (strain 972 / ATCC 24843) (Fission yeast).